Here is a 78-residue protein sequence, read N- to C-terminus: Small ribosomal subunit protein uS17 (78 aa).

The protein belongs to the universal ribosomal protein uS17 family. In terms of assembly, part of the 30S ribosomal subunit.

Its function is as follows. One of the primary rRNA binding proteins, it binds specifically to the 5'-end of 16S ribosomal RNA. This chain is Small ribosomal subunit protein uS17, found in Parvibaculum lavamentivorans (strain DS-1 / DSM 13023 / NCIMB 13966).